A 430-amino-acid polypeptide reads, in one-letter code: Enolase (430 aa).

Q167 serves as a coordination point for (2R)-2-phosphoglycerate. Residue E209 is the Proton donor of the active site. The Mg(2+) site is built by D246, E289, and D316. (2R)-2-phosphoglycerate contacts are provided by K341, R370, S371, and K392. K341 functions as the Proton acceptor in the catalytic mechanism.

Belongs to the enolase family. In terms of assembly, component of the RNA degradosome, a multiprotein complex involved in RNA processing and mRNA degradation. The cofactor is Mg(2+).

The protein resides in the cytoplasm. The protein localises to the secreted. Its subcellular location is the cell surface. It catalyses the reaction (2R)-2-phosphoglycerate = phosphoenolpyruvate + H2O. It functions in the pathway carbohydrate degradation; glycolysis; pyruvate from D-glyceraldehyde 3-phosphate: step 4/5. Catalyzes the reversible conversion of 2-phosphoglycerate (2-PG) into phosphoenolpyruvate (PEP). It is essential for the degradation of carbohydrates via glycolysis. In Alteromonas mediterranea (strain DSM 17117 / CIP 110805 / LMG 28347 / Deep ecotype), this protein is Enolase.